A 160-amino-acid chain; its full sequence is Phosphopantetheine adenylyltransferase (160 aa).

Ser-11 provides a ligand contact to substrate. ATP is bound by residues 11-12 (SF) and His-19. Substrate-binding residues include Lys-43, Leu-75, and Arg-89. ATP contacts are provided by residues 90–92 (GLR), Glu-100, and 125–131 (YSFISSS).

It belongs to the bacterial CoaD family. In terms of assembly, homohexamer. Requires Mg(2+) as cofactor.

It localises to the cytoplasm. The enzyme catalyses (R)-4'-phosphopantetheine + ATP + H(+) = 3'-dephospho-CoA + diphosphate. It participates in cofactor biosynthesis; coenzyme A biosynthesis; CoA from (R)-pantothenate: step 4/5. Functionally, reversibly transfers an adenylyl group from ATP to 4'-phosphopantetheine, yielding dephospho-CoA (dPCoA) and pyrophosphate. In Staphylococcus aureus (strain Mu3 / ATCC 700698), this protein is Phosphopantetheine adenylyltransferase.